A 157-amino-acid polypeptide reads, in one-letter code: Cyclic pyranopterin monophosphate synthase (157 aa).

Substrate is bound by residues 74-76 and 112-113; these read MCH and ME. Residue Asp127 is part of the active site.

Belongs to the MoaC family. Homohexamer; trimer of dimers.

It catalyses the reaction (8S)-3',8-cyclo-7,8-dihydroguanosine 5'-triphosphate = cyclic pyranopterin phosphate + diphosphate. The protein operates within cofactor biosynthesis; molybdopterin biosynthesis. Functionally, catalyzes the conversion of (8S)-3',8-cyclo-7,8-dihydroguanosine 5'-triphosphate to cyclic pyranopterin monophosphate (cPMP). The polypeptide is Cyclic pyranopterin monophosphate synthase (Campylobacter jejuni (strain RM1221)).